The chain runs to 463 residues: uncharacterized protein (463 aa).

It belongs to the mycobacterial PPE family.

This is an uncharacterized protein from Mycobacterium tuberculosis (strain CDC 1551 / Oshkosh).